The primary structure comprises 493 residues: Maintenance of mitochondrial morphology protein 1 (493 aa).

The Lumenal portion of the chain corresponds to 1–23; the sequence is MSQHSQYGVPGVPAQSSLSFTQG. A helical membrane pass occupies residues 24 to 44; it reads FLLGQLSVVLLIGAFIKFFIF. At 45 to 493 the chain is on the cytoplasmic side; that stretch reads GEAPAPPSRG…GSMPRVVRTP (449 aa). The tract at residues 52–104 is disordered; the sequence is SRGLASRTASHHRSYSINQGDNNANNNTNNGSSPRTLREKPSTSNVLRPVPSS. The span at 69–81 shows a compositional bias: low complexity; the sequence is NQGDNNANNNTNN. Over residues 93-104 the composition is skewed to polar residues; it reads STSNVLRPVPSS. Residues 140–391 form the SMP-LTD domain; the sequence is QPESLDWFNV…EPRVQVVGLP (252 aa). A disordered region spans residues 420-493; it reads SSRSGGGPVE…GSMPRVVRTP (74 aa).

The protein belongs to the MMM1 family. Homodimer. Component of the ER-mitochondria encounter structure (ERMES) or MDM complex, composed of mmm1, mdm10, mdm12 and mdm34. A mmm1 homodimer associates with one molecule of mdm12 on each side in a pairwise head-to-tail manner, and the SMP-LTD domains of mmm1 and mdm12 generate a continuous hydrophobic tunnel for phospholipid trafficking.

It localises to the endoplasmic reticulum membrane. In terms of biological role, component of the ERMES/MDM complex, which serves as a molecular tether to connect the endoplasmic reticulum (ER) and mitochondria. Components of this complex are involved in the control of mitochondrial shape and protein biogenesis, and function in nonvesicular lipid trafficking between the ER and mitochondria. The mdm12-mmm1 subcomplex functions in the major beta-barrel assembly pathway that is responsible for biogenesis of all outer membrane beta-barrel proteins, and acts in a late step after the SAM complex. The mdm10-mdm12-mmm1 subcomplex further acts in the TOM40-specific pathway after the action of the mdm12-mmm1 complex. Essential for establishing and maintaining the structure of mitochondria and maintenance of mtDNA nucleoids. This Talaromyces stipitatus (strain ATCC 10500 / CBS 375.48 / QM 6759 / NRRL 1006) (Penicillium stipitatum) protein is Maintenance of mitochondrial morphology protein 1.